The primary structure comprises 83 residues: RNA-binding protein Hfq (83 aa).

One can recognise a Sm domain in the interval 10 to 70 (DTFLNQVRKE…ISTVMPLRPI (61 aa)).

The protein belongs to the Hfq family. In terms of assembly, homohexamer.

Functionally, RNA chaperone that binds small regulatory RNA (sRNAs) and mRNAs to facilitate mRNA translational regulation in response to envelope stress, environmental stress and changes in metabolite concentrations. Also binds with high specificity to tRNAs. The sequence is that of RNA-binding protein Hfq from Desulfitobacterium hafniense (strain Y51).